A 339-amino-acid chain; its full sequence is Homeobox protein Hox-D13 (339 aa).

Positions 1-33 (MSRSGTWDMDGLRADGGAAGAAPASSSSSVAAP) are disordered. A compositionally biased stretch (low complexity) spans 20–33 (GAAPASSSSSVAAP). Positions 272-331 (GRKKRVPYTKLQLKELENEYAINKFINKDKRRRISAATNLSERQVTIWFQNRRVKDKKIV) form a DNA-binding region, homeobox.

The protein belongs to the Abd-B homeobox family.

It is found in the nucleus. In terms of biological role, sequence-specific transcription factor that binds gene promoters and activates their transcription. Part of a developmental regulatory system that provides cells with specific positional identities on the anterior-posterior axis. This chain is Homeobox protein Hox-D13 (Hoxd13), found in Mus musculus (Mouse).